The chain runs to 1286 residues: CLIP-associating protein 2 (1286 aa).

Residues 1–40 are golgi localization; the sequence is MRRLICKRICDYKSFDDEESVDGNRPSSAASAFKVPAPKT. Phosphoserine occurs at positions 14 and 20. The tract at residues 17–67 is disordered; the sequence is DEESVDGNRPSSAASAFKVPAPKTPGNPVSSARKPGSAGGPKVGGPSKEGG. Positions 53–67 are enriched in gly residues; it reads SAGGPKVGGPSKEGG. Residues 66–317 form a TOG 1 region; the sequence is GGAGAVDEDD…KSLQTYLKSS (252 aa). 3 HEAT repeats span residues 179 to 214, 215 to 251, and 256 to 293; these read HGAE…IRHT, HVPR…EWQT, and RHAA…HFPG. The disordered stretch occupies residues 320-374; sequence VASLPQSDRSSSSSQESLNRPFSSKWSTANPSTVAGRVSVGGSKANPLPGSLQRS. 3 positions are modified to phosphoserine: S322, S333, and S336. The span at 322–340 shows a compositional bias: low complexity; the sequence is SLPQSDRSSSSSQESLNRP. Residues 341–352 show a composition bias toward polar residues; the sequence is FSSKWSTANPST. Residues S374, S376, and S413 each carry the phosphoserine modification. The tract at residues 411–473 is disordered; that stretch reads YASLEDTSDK…GSRSGSPGRV (63 aa). Over residues 417–431 the composition is skewed to basic and acidic residues; the sequence is TSDKMDGTASDDGRV. An interaction with microtubules, MAPRE1 and MAPRE3 region spans residues 450-565; it reads RGRSRTKMVS…GPGYGISQSS (116 aa). Low complexity predominate over residues 459–473; the sequence is SQSQPGSRSGSPGRV. S461, S465, S469, S484, and S495 each carry phosphoserine. Residues 493 to 564 are disordered; that stretch reads SASAQKRSKI…LGPGYGISQS (72 aa). Residues 500–503 carry the SXIP motif 1; mediates interaction with MAPRE1 and targeting to microtubule plus ends motif; it reads SKIP. A Phosphoserine modification is found at S513. The SXIP motif 2; mediates interaction with MAPRE1 and targeting to microtubule plus ends motif lies at 523-526; that stretch reads SRIP. Phosphoserine occurs at positions 531, 535, 570, 572, 581, 614, and 620. Residues 605–616 are compositionally biased toward basic and acidic residues; sequence RRYESYGMHSDD. The tract at residues 605-638 is disordered; the sequence is RRYESYGMHSDDDANSDASSACSERSYSSRNGSI. Residues 620-634 show a composition bias toward low complexity; that stretch reads SDASSACSERSYSSR. The TOG 2 stretch occupies residues 642–873; the sequence is MRQTEDVAEV…TKLLHNHLRN (232 aa). 2 HEAT repeats span residues 702–739 and 764–801; these read KVFS…KMGA and LQFN…QMDP. Phosphothreonine is present on T779. The interval 864 to 1286 is interaction with RSN and localization to the Golgi and kinetochores; it reads TKLLHNHLRN…DPTADVSGQS (423 aa). Disordered stretches follow at residues 870 to 920 and 944 to 989; these read HLRN…FDYD and SFRS…SQPA. Composition is skewed to polar residues over residues 872–884 and 893–914; these read RNTG…SMGS and SPAN…TLSP. S884 is subject to Phosphoserine. S944, S947, S1005, and S1021 each carry phosphoserine. Positions 947–964 are enriched in basic and acidic residues; the sequence is SQEDMSEPVRRDPKKEDG. Residues 1009–1286 form a required for cortical localization region; that stretch reads RDYNPYNYSD…DPTADVSGQS (278 aa). HEAT repeat units follow at residues 1046–1083, 1090–1127, and 1208–1245; these read LDHS…TQEE, EHFK…HQPA, and MLLP…VIGD.

The protein belongs to the CLASP family. In terms of assembly, interacts with microtubules. Interacts with MAPRE1; probably required for targeting to growing microtubule plus ends. Interacts with ERC1, MAPRE3 and PHLDB2. The interaction with ERC1 may be mediated by PHLDB2. Interacts with GCC2; recruits CLASP2 to Golgi membranes. Interacts with CLIP2 and RSN. Interacts with MACF1. Interacts with mtcl2. Interacts with MTCL1. Phosphorylated by GSK3B. Phosphorylation by GSK3B may negatively regulate binding to microtubule lattices in lamella. Isoform 2 is phosphorylated on Ser-241. As to expression, highly expressed in brain and at low levels in heart, kidney and lung.

The protein localises to the cytoplasm. The protein resides in the cytoskeleton. It is found in the microtubule organizing center. Its subcellular location is the centrosome. It localises to the chromosome. The protein localises to the centromere. The protein resides in the kinetochore. It is found in the spindle. Its subcellular location is the spindle pole. It localises to the golgi apparatus. The protein localises to the trans-Golgi network. The protein resides in the cell membrane. It is found in the cell projection. Its subcellular location is the ruffle membrane. It localises to the cell cortex. Microtubule plus-end tracking protein that promotes the stabilization of dynamic microtubules. Involved in the nucleation of noncentrosomal microtubules originating from the trans-Golgi network (TGN). Required for the polarization of the cytoplasmic microtubule arrays in migrating cells towards the leading edge of the cell. May act at the cell cortex to enhance the frequency of rescue of depolymerizing microtubules by attaching their plus-ends to cortical platforms composed of ERC1 and PHLDB2. This cortical microtubule stabilizing activity is regulated at least in part by phosphatidylinositol 3-kinase signaling. Also performs a similar stabilizing function at the kinetochore which is essential for the bipolar alignment of chromosomes on the mitotic spindle. Acts as a mediator of ERBB2-dependent stabilization of microtubules at the cell cortex. The polypeptide is CLIP-associating protein 2 (Clasp2) (Mus musculus (Mouse)).